A 239-amino-acid chain; its full sequence is Nicotinamide riboside transporter PnuC (239 aa).

At 1 to 21 (MDFFSVQNILVHIPIGAGGYD) the chain is on the cytoplasmic side. A helical membrane pass occupies residues 22 to 42 (LSWIEAVGTIAGLLCIGLASL). Topologically, residues 43-48 (EKISNY) are periplasmic. A helical transmembrane segment spans residues 49 to 68 (FFGLINVTLFGIIFFQIQLY). Topologically, residues 69–71 (ASL) are cytoplasmic. The chain crosses the membrane as a helical span at residues 72-89 (LLQVFFFAANIYGWYAWS). The Periplasmic segment spans residues 90–109 (RQTSQNEAELKIRWLPLPKA). A helical membrane pass occupies residues 110–127 (LSWLAVCVVSIGLMTVFI). Over 128-157 (NPVFAFLTRVAVMIMQALGLQVVMPELQPD) the chain is Cytoplasmic. A helical transmembrane segment spans residues 158–177 (AFPFWDSCMMVLSIVAMILM). Residues 178–183 (TRKYVE) lie on the Periplasmic side of the membrane. The chain crosses the membrane as a helical span at residues 184–206 (NWLLWVIINVISVVIFALQGVYA). Beta-nicotinamide D-riboside is bound by residues Trp188 and Asn192. The Cytoplasmic portion of the chain corresponds to 207 to 239 (MSLEYIILTFIALNGSRMWINSARERGSRALSH).

The protein belongs to the nicotinamide ribonucleoside (NR) uptake permease (TC 4.B.1) family.

The protein localises to the cell inner membrane. Functionally, required for nicotinamide riboside transport across the inner membrane. The polypeptide is Nicotinamide riboside transporter PnuC (pnuC) (Escherichia coli (strain K12)).